The following is a 119-amino-acid chain: FAD-linked sulfhydryl oxidase (119 aa).

The 97-residue stretch at 1-97 (MLHWGPKFWR…ISWSEYKNIY (97 aa)) folds into the ERV/ALR sulfhydryl oxidase domain. The cysteines at positions 44 and 47 are disulfide-linked.

The protein belongs to the asfivirus B119L family. Interacts with A151R. FAD serves as cofactor.

The protein resides in the host cytoplasm. Its subcellular location is the virion. The catalysed reaction is 2 R'C(R)SH + O2 = R'C(R)S-S(R)CR' + H2O2. FAD-dependent sulfhydryl oxidase that catalyzes the formation of disulfide bonds in viral proteins produced in the cell cytoplasm. The sequence is that of FAD-linked sulfhydryl oxidase from Ornithodoros (relapsing fever ticks).